Consider the following 541-residue polypeptide: 2-succinyl-5-enolpyruvyl-6-hydroxy-3-cyclohexene-1-carboxylate synthase (541 aa).

This sequence belongs to the TPP enzyme family. MenD subfamily. As to quaternary structure, homodimer. Mg(2+) is required as a cofactor. Requires Mn(2+) as cofactor. Thiamine diphosphate serves as cofactor.

The catalysed reaction is isochorismate + 2-oxoglutarate + H(+) = 5-enolpyruvoyl-6-hydroxy-2-succinyl-cyclohex-3-ene-1-carboxylate + CO2. The protein operates within quinol/quinone metabolism; 1,4-dihydroxy-2-naphthoate biosynthesis; 1,4-dihydroxy-2-naphthoate from chorismate: step 2/7. Its pathway is quinol/quinone metabolism; menaquinone biosynthesis. Functionally, catalyzes the thiamine diphosphate-dependent decarboxylation of 2-oxoglutarate and the subsequent addition of the resulting succinic semialdehyde-thiamine pyrophosphate anion to isochorismate to yield 2-succinyl-5-enolpyruvyl-6-hydroxy-3-cyclohexene-1-carboxylate (SEPHCHC). The sequence is that of 2-succinyl-5-enolpyruvyl-6-hydroxy-3-cyclohexene-1-carboxylate synthase from Leuconostoc citreum (strain KM20).